A 93-amino-acid chain; its full sequence is Phosphoribosyl-ATP pyrophosphatase (93 aa).

It belongs to the PRA-PH family.

The protein resides in the cytoplasm. It carries out the reaction 1-(5-phospho-beta-D-ribosyl)-ATP + H2O = 1-(5-phospho-beta-D-ribosyl)-5'-AMP + diphosphate + H(+). It participates in amino-acid biosynthesis; L-histidine biosynthesis; L-histidine from 5-phospho-alpha-D-ribose 1-diphosphate: step 2/9. The sequence is that of Phosphoribosyl-ATP pyrophosphatase from Mycolicibacterium gilvum (strain PYR-GCK) (Mycobacterium gilvum (strain PYR-GCK)).